A 282-amino-acid polypeptide reads, in one-letter code: 2-dehydro-3-deoxyphosphooctonate aldolase (282 aa).

It belongs to the KdsA family.

The protein localises to the cytoplasm. It catalyses the reaction D-arabinose 5-phosphate + phosphoenolpyruvate + H2O = 3-deoxy-alpha-D-manno-2-octulosonate-8-phosphate + phosphate. The protein operates within carbohydrate biosynthesis; 3-deoxy-D-manno-octulosonate biosynthesis; 3-deoxy-D-manno-octulosonate from D-ribulose 5-phosphate: step 2/3. It participates in bacterial outer membrane biogenesis; lipopolysaccharide biosynthesis. The polypeptide is 2-dehydro-3-deoxyphosphooctonate aldolase (Shewanella woodyi (strain ATCC 51908 / MS32)).